The chain runs to 363 residues: uncharacterized protein (363 aa).

29–36 (GSINSGKT) contacts ATP.

The protein belongs to the archaeal ATPase family.

This is an uncharacterized protein from Methanocaldococcus jannaschii (strain ATCC 43067 / DSM 2661 / JAL-1 / JCM 10045 / NBRC 100440) (Methanococcus jannaschii).